A 126-amino-acid chain; its full sequence is 13 kDa ribonucleoprotein-associated protein (126 aa).

It belongs to the eukaryotic ribosomal protein eL8 family. As to quaternary structure, component of the U3 snoRNP particle. Binds to the C'/D and B/C motifs in U3 snoRNA. Component of the 25S U4/U6.U5 tri-snRNP particle, a subcomplex of the spliceosome. Binds to the 5' stem-loop of U4 snRNA.

Its subcellular location is the nucleus. It localises to the nucleolus. Functionally, common component of the spliceosome and rRNA processing machinery. In association with the spliceosomal U4/U6.U5 tri-snRNP particle, required for splicing of pre-mRNA. In association with box C/D snoRNPs, required for processing of pre-ribosomal RNA (rRNA) and site-specific 2'-O-methylation of substrate RNAs. Essential for the accumulation and stability of U4 snRNA, U6 snRNA, and box C/D snoRNAs. This chain is 13 kDa ribonucleoprotein-associated protein (SNU13), found in Candida glabrata (strain ATCC 2001 / BCRC 20586 / JCM 3761 / NBRC 0622 / NRRL Y-65 / CBS 138) (Yeast).